The following is a 1076-amino-acid chain: Serine/threonine-protein phosphatase 6 regulatory ankyrin repeat subunit C (1076 aa).

28 ANK repeats span residues 7–36, 40–69, 73–102, 106–135, 139–168, 172–201, 205–234, 238–267, 271–301, 305–334, 338–367, 371–400, 422–451, 455–484, 488–545, 549–579, 584–613, 617–646, 651–680, 687–716, 720–749, 753–782, 790–819, 822–852, 857–886, 890–920, 924–953, and 960–989; these read TDQPPLVQAIFSRDVEEVRSLLSQKENINV, ERRTPLHAAAYVGDVPILQLLLMSGANVNA, LWLTPLHRAAASRNEKVLGLLLAHSADVNA, LWQTPLHVAAANRATKCAEALAPLLSSLNV, SGRSALHHAVHSGHLETVNLLLNKGASLNV, KERQPLHWAAFLGHLEVLKLLVARGADLGC, KGYGLLHTAAASGQIEVVKYLLRMGAEIDE, FGNTALHIACYLGQDAVAIELVNAGANVNQ, KGFTPLHVAAVSTNGALCLELLVNNGADVNY, EGKSPLHMAAIHGRFTRSQILIQNGSEIDC, FGNTPLHVAARYGHELLISTLMTNGADTAR, HDMFPLHLAVLFGFSDCCRKLLSSGQLYSI, LGRTCLHAAASGGNVECLNLLLSSGADLRR, FGRTPLHYAAANGSYQCAVTLVTAGAGVNE, KGCS…DPSL, QGYTAVHYAAAYGNRQNLELLLEMSFNCLED, IPVSPLHLAAYNGHCEALKTLAETLVNLDV, KGRTALFLATERGSTECVEVLTAHGASALI, RKWTPLHAAAASGHTDSLHLLIDSGERADI, YGQTPLMLAIMNGHVDCVHLLLEKGSTADA, RGRTALHRGAVTGCEDCLAALLDHDAFVLC, KGRTPIHLASACGHTAVLRTLLQAALSTDP, SGYSPMHWASYTGHEDCLELLLEHSPFSYL, NPFTPLHCAVINNQDSTTEMLLGALGAKIVN, KGRTPLHAAAFADNVSGLRMLLQHQAEVNA, TGRTALMTAAENGQTAAVEFLLYRGKADLTV, NKNTALHLACSKGHEKCALMILAETQDLGL, and ALQMPLHIAARNGLASVVQALLSHGATVLA. Positions 502–514 are enriched in basic and acidic residues; it reads YRRAEPHTPSSHD. The tract at residues 502 to 522 is disordered; it reads YRRAEPHTPSSHDAEEDEPLK. 2 positions are modified to phosphoserine: serine 1028 and serine 1075.

Protein phosphatase 6 (PP6) holoenzyme is proposed to be a heterotrimeric complex formed by the catalytic subunit, a SAPS domain-containing subunit (PP6R) and an ankyrin repeat-domain containing regulatory subunit (ARS). Interacts with PPP6R1.

Putative regulatory subunit of protein phosphatase 6 (PP6) that may be involved in the recognition of phosphoprotein substrates. This is Serine/threonine-protein phosphatase 6 regulatory ankyrin repeat subunit C (ANKRD52) from Homo sapiens (Human).